The sequence spans 160 residues: Baculoviral IAP repeat-containing protein 5.1-B (160 aa).

A BIR repeat occupies 13-83; the sequence is QRLQDFRNMY…EGWEPDDDPW (71 aa). Phosphothreonine; by CDK1 is present on Thr-43. 4 residues coordinate Zn(2+): Cys-66, Cys-69, His-86, and Cys-93.

This sequence belongs to the IAP family. In terms of assembly, component of the CPC at least composed of survivin/birc5, incenp, cdca8/borealin and/or cdca9/dasra-A, and aurkb/aurora-B. Interacts directly with incenp (via N-terminus), and may weakly interact with aurkb (via N-terminus) to stabilize the complex. Interacts with GTP-bound ran in both the S and M phases of the cell cycle. Also found in a complex with ubiquitin-mediated signaling proteins including at least usp9x/xFAM, nploc4/npl4 and ufd1. Post-translationally, ubiquitination is required for centrosome-targeting.

The protein resides in the cytoplasm. It localises to the nucleus. The protein localises to the chromosome. Its subcellular location is the centromere. It is found in the cytoskeleton. The protein resides in the spindle. Its function is as follows. Component of the chromosomal passenger complex (CPC), a complex that acts as a key regulator of mitosis. The CPC complex has essential functions at the centromere in ensuring correct chromosome alignment and segregation and is required for chromatin-induced microtubule stabilization and spindle assembly. Stimulates the mitotic kinase activity of aurkb/aurora-B in the CPC. Does not appear to exhibit anti-apoptotic activity. CPC. Does not appear to exhibit anti-apoptotic activity. The protein is Baculoviral IAP repeat-containing protein 5.1-B (birc5.1-b) of Xenopus laevis (African clawed frog).